The primary structure comprises 143 residues: Large ribosomal subunit protein uL11 (143 aa).

Belongs to the universal ribosomal protein uL11 family. As to quaternary structure, part of the ribosomal stalk of the 50S ribosomal subunit. Interacts with L10 and the large rRNA to form the base of the stalk. L10 forms an elongated spine to which L12 dimers bind in a sequential fashion forming a multimeric L10(L12)X complex. In terms of processing, one or more lysine residues are methylated.

Forms part of the ribosomal stalk which helps the ribosome interact with GTP-bound translation factors. This is Large ribosomal subunit protein uL11 from Burkholderia cenocepacia (strain HI2424).